The chain runs to 181 residues: Inner membrane-spanning protein YciB (181 aa).

The next 5 helical transmembrane spans lie at 8–28 (FPII…ATAA), 53–73 (ITLI…NAIF), 76–96 (WKPT…HFFG), 121–141 (LSWA…VYNF), and 149–169 (FKLF…AFYI).

This sequence belongs to the YciB family.

It localises to the cell inner membrane. Its function is as follows. Plays a role in cell envelope biogenesis, maintenance of cell envelope integrity and membrane homeostasis. This chain is Inner membrane-spanning protein YciB, found in Coxiella burnetii (strain RSA 331 / Henzerling II).